Reading from the N-terminus, the 510-residue chain is DNA nucleotidylexotransferase (510 aa).

The short motif at 11–17 (PRRKQPK) is the Nuclear localization signal element. The region spanning 27–124 (KYDIKFKDIA…QPVEIERKHR (98 aa)) is the BRCT domain. The tract at residues 254–258 (VGLRT) is involved in DNA binding. Residues 329–334 (GFRRGN) and 338–341 (HDVD) each bind a 2'-deoxyribonucleoside 5'-triphosphate. Residues aspartate 339, aspartate 341, and aspartate 434 each contribute to the Mg(2+) site. 449–450 (GW) is a binding site for a 2'-deoxyribonucleoside 5'-triphosphate.

The protein belongs to the DNA polymerase type-X family. It depends on Mg(2+) as a cofactor.

The protein localises to the nucleus. The catalysed reaction is DNA(n) + a 2'-deoxyribonucleoside 5'-triphosphate = DNA(n+1) + diphosphate. In terms of biological role, template-independent DNA polymerase which catalyzes the random addition of deoxynucleoside 5'-triphosphate to the 3'-end of a DNA initiator. One of the in vivo functions of this enzyme is the addition of nucleotides at the junction (N region) of rearranged Ig heavy chain and T-cell receptor gene segments during the maturation of B- and T-cells. The sequence is that of DNA nucleotidylexotransferase (DNTT) from Ambystoma mexicanum (Axolotl).